Here is a 338-residue protein sequence, read N- to C-terminus: MNAPRLTDTTLRDGSHALAHTFTRQQVRDIVRALDRAGVPVIEVTHGDGLAGSSLQYGFSRVPDLDLIAEARETAERARIAALLLPGIGTRRELRAAVERGVQVLRIATQCTEADISEEHFKMAKDMGLETVGFLMMSHMRPPEFLAEQARLMESYGADCVYVVDSAGAMLPHDAAARVQALKAALTVQVGFHAHNNLGLGIGNTLAALEAGADQIDGCLRGLGAGAGNAATEVLAAVLDRLGINPGLDVLALMDAAEYVVAPIMPFQPFPDRDAITIGYAGVYSTFLLHARRIGEQLGVDPRAILIELGRRQTVAGQEDWILDVALELVRQQQTTPV.

The Pyruvate carboxyltransferase domain occupies 4-254; sequence PRLTDTTLRD…NPGLDVLALM (251 aa). Substrate is bound at residue 12 to 13; that stretch reads RD. Position 13 (Asp-13) interacts with Mn(2+). The Proton acceptor role is filled by His-16. The substrate site is built by Ser-166 and His-193. Mn(2+)-binding residues include His-193 and His-195. Tyr-284 contacts substrate.

This sequence belongs to the 4-hydroxy-2-oxovalerate aldolase family.

It carries out the reaction (S)-4-hydroxy-2-oxopentanoate = acetaldehyde + pyruvate. The chain is 4-hydroxy-2-oxovalerate aldolase from Roseiflexus sp. (strain RS-1).